The following is a 930-amino-acid chain: Translation initiation factor IF-2 (930 aa).

Residues 50 to 67 (FKPAAAPKVEAKPAAPKV) show a composition bias toward low complexity. 2 disordered regions span residues 50 to 195 (FKPA…PRID) and 260 to 346 (EVVP…HELP). Basic and acidic residues-rich tracts occupy residues 68–90 (SAEK…EAKP) and 110–125 (FKAE…AERR). Positions 129–141 (KGNNRDQQQNGNR) are enriched in low complexity. Basic and acidic residues-rich tracts occupy residues 157 to 167 (RDNRRFNDQAK) and 262 to 295 (VPEK…DGPR). Residues 309–318 (NQKNSNWNNN) are compositionally biased toward low complexity. The span at 337-346 (VTERKFHELP) shows a compositional bias: basic and acidic residues. The 168-residue stretch at 432-599 (ERPPVVTIMG…TVLLVAEIQE (168 aa)) folds into the tr-type G domain. The G1 stretch occupies residues 441–448 (GHVDHGKT). GTP is bound at residue 441 to 448 (GHVDHGKT). The segment at 466-470 (GITQH) is G2. The G3 stretch occupies residues 487–490 (DTPG). GTP-binding positions include 487–491 (DTPGH) and 541–544 (NKID). Residues 541 to 544 (NKID) form a G4 region. The segment at 577-579 (SAK) is G5.

Belongs to the TRAFAC class translation factor GTPase superfamily. Classic translation factor GTPase family. IF-2 subfamily.

The protein resides in the cytoplasm. Functionally, one of the essential components for the initiation of protein synthesis. Protects formylmethionyl-tRNA from spontaneous hydrolysis and promotes its binding to the 30S ribosomal subunits. Also involved in the hydrolysis of GTP during the formation of the 70S ribosomal complex. The chain is Translation initiation factor IF-2 from Streptococcus pneumoniae (strain ATCC BAA-255 / R6).